The sequence spans 1442 residues: Protein patched homolog 1 (1442 aa).

The segment at 1–45 is disordered; the sequence is MASAADALEPESGSSTAGGGSHPVRAARSARGRRRRSGGTRRAAA. The Cytoplasmic segment spans residues 1–101; that stretch reads MASAADALEP…GCYIQKNCGK (101 aa). A compositionally biased stretch (basic residues) spans 28 to 39; it reads RSARGRRRRSGG. Residues 102–122 form a helical membrane-spanning segment; sequence FLVVGLLYSAFAVGLRAANLE. Residues 123–436 are Extracellular-facing; the sequence is TNVEELWVEV…LDDILKSFSD (314 aa). N-linked (GlcNAc...) asparagine glycans are attached at residues N141, N312, N349, and N414. Residues 437 to 457 form a helical membrane-spanning segment; it reads VSVIRVASGYLLMLAYACLTM. One can recognise an SSD domain in the interval 438–598; that stretch reads SVIRVASGYL…LLIFPAILSM (161 aa). Topologically, residues 458-472 are cytoplasmic; the sequence is LRWDCAKSQGAVGLA. A helical transmembrane segment spans residues 473-493; it reads GVLLVALSVAAGLGLCSLIGI. Topologically, residues 494 to 501 are extracellular; that stretch reads SFNAATTQ. Residues 502-522 traverse the membrane as a helical segment; sequence VLPFLALGVGVDDVFLLAHAF. The Cytoplasmic portion of the chain corresponds to 523–547; the sequence is SETGQNKRIPFEDRTGECLKRTGAS. A helical membrane pass occupies residues 548-568; sequence VALTSISNVTAFFMAALIPIP. Residues 569–577 are Extracellular-facing; sequence ALRAFSLQA. Residues 578 to 598 form a helical membrane-spanning segment; it reads AVVVVFNFAMVLLIFPAILSM. The Cytoplasmic segment spans residues 599-747; sequence DLYRREDRRL…HYAPFLLKPK (149 aa). A helical transmembrane segment spans residues 748 to 768; the sequence is AKVVVIFLFLGLLGLSLYGTT. The Extracellular portion of the chain corresponds to 769–1026; sequence RVRDGLDLTD…WEQYIGLRHW (258 aa). N827, N874, and N999 each carry an N-linked (GlcNAc...) asparagine glycan. The chain crosses the membrane as a helical span at residues 1027-1047; it reads LLLSISVVLACTFLVCALFLL. The Cytoplasmic segment spans residues 1048–1053; it reads NPWTAG. A helical membrane pass occupies residues 1054 to 1074; that stretch reads IIVVVLALMTVELFGMMGLIG. Residues 1075–1082 lie on the Extracellular side of the membrane; sequence IKLSAVPV. Residues 1083–1101 traverse the membrane as a helical segment; the sequence is VILIASVGIGVEFTVHIAL. Residues 1102–1120 lie on the Cytoplasmic side of the membrane; sequence AFLTAIGDKNRRAVLALEH. A helical transmembrane segment spans residues 1121-1141; sequence MFAPVLDGAVSTLLGVLMLAG. Topologically, residues 1142 to 1153 are extracellular; that stretch reads SEFDFIVRYFFA. The helical transmembrane segment at 1154-1174 threads the bilayer; the sequence is VLAILTILGVLNGLVLLPVLL. The Cytoplasmic portion of the chain corresponds to 1175–1442; the sequence is SFFGPYPEVS…EERTAGKISE (268 aa). Disordered regions lie at residues 1188 to 1231 and 1266 to 1338; these read GRNR…TTVS and STVV…LNHK. The segment covering 1217 to 1226 has biased composition (low complexity); the sequence is SDSSDSEYSS. Polar residues predominate over residues 1276–1293; it reads QSSPRLQSNPEAGTQQVW.

It belongs to the patched family. Glycosylation is necessary for SHH binding. Expression is seen in the embryonic neural tube, sclerotome, visceral mesoderm, and limb bud.

It is found in the membrane. Its function is as follows. Acts as a receptor for sonic hedgehog (SHH), indian hedgehog (IHH) and desert hedgehog (DHH). Associates with the smoothened protein (SMO) to transduce the hedgehog's proteins signal. This is Protein patched homolog 1 (PTCH1) from Gallus gallus (Chicken).